The primary structure comprises 398 residues: Alpha-ketoglutarate-dependent dioxygenase bsc9 (398 aa).

His167 and Asp169 together coordinate Fe cation. Position 212 (Thr212) interacts with 2-oxoglutarate. A Fe cation-binding site is contributed by His365. A 2-oxoglutarate-binding site is contributed by Arg377.

Belongs to the TfdA dioxygenase family. Fe(2+) is required as a cofactor.

Its pathway is mycotoxin biosynthesis. Its function is as follows. Alpha-ketoglutarate dependent dioxygenase; part of the gene cluster that mediates the biosynthesis of the diterpene glucoside brassicicene C. In the first step of the brassicicene C biosynthesis, the bifunctional diterpene synthase bsc8 that possesses both prenyl transferase and terpene cyclase activity, converts isopentenyl diphosphate and dimethylallyl diphosphate into geranylgeranyl diphosphate (GGDP) that is further converted into fusicocca-2,10(14)-diene, the first precursor for brassicicene C. Fusicocca-2,10(14)-diene is then substrate of cytochrome P450 monooxygenase bsc1 for hydroxylation at the C-8 position. Oxidation at C-16 position to aldehyde is then catalyzed by the cytochrome P450 monooyxygenase bsc7, yielding fusicocca-2,10(14)-diene-8-beta,16-diol. Follows the isomerization of the double bond and reduction of aldehyde to alcohol catalyzed by the short-chain dehydrogenase/reductase bsc3 to yield the diol compound fusicocca-1,10(14)-diene-8 beta,16-diol. The next step is the oxidation at the C-3 position of fusicocca-2,10(14)-diene-8-beta,16-diol catalyzed by the alpha-ketoglutarate dependent dioxygenase bsc9, to produce a triol compound. Methylation of the hydroxy group at position 16 is performed by the methyltransferase bsc6. 16-O-methylation is followed by oxidation at the C-13 position to ketone and an alkyl shift of the methyl group leads to brassicicene C. Although the probable acetyltransferase bsc4 is included in the gene cluster, no acetylation reactions are necessary for brassicicene C biosynthesis. However, the fact that brassicicene E, which is a structurally related compound having an acetoxy group at position 12, was previously isolated from another strain of A.brassicicola suggests that the ATCC 96836 strain might also produce a small amount of brassicicene E. The sequence is that of Alpha-ketoglutarate-dependent dioxygenase bsc9 from Alternaria brassicicola (Dark leaf spot agent).